Consider the following 657-residue polypeptide: Glycogen debranching enzyme (657 aa).

The active-site Nucleophile is the Asp336. The Proton donor role is filled by Glu371. The tract at residues 460–479 is disordered; the sequence is ANGEENRDGTNNNYSNNHGK.

The protein belongs to the glycosyl hydrolase 13 family.

It catalyses the reaction Hydrolysis of (1-&gt;6)-alpha-D-glucosidic linkages to branches with degrees of polymerization of three or four glucose residues in limit dextrin.. It functions in the pathway glycan degradation; glycogen degradation. Removes maltotriose and maltotetraose chains that are attached by 1,6-alpha-linkage to the limit dextrin main chain, generating a debranched limit dextrin. This chain is Glycogen debranching enzyme, found in Shigella flexneri serotype 5b (strain 8401).